The sequence spans 396 residues: Elongation factor Tu (396 aa).

The tr-type G domain maps to 10 to 205; that stretch reads KSHANIGTIG…AVDEYIPTPE (196 aa). Residues 19-26 form a G1 region; sequence GHVDHGKT. 19–26 is a binding site for GTP; that stretch reads GHVDHGKT. Mg(2+) is bound at residue Thr-26. The tract at residues 61–65 is G2; it reads GITIS. A G3 region spans residues 82–85; that stretch reads DCPG. GTP-binding positions include 82 to 86 and 137 to 140; these read DCPGH and NKCD. Positions 137 to 140 are G4; that stretch reads NKCD. The G5 stretch occupies residues 175-177; sequence SAL. The residue at position 385 (Thr-385) is a Phosphothreonine.

The protein belongs to the TRAFAC class translation factor GTPase superfamily. Classic translation factor GTPase family. EF-Tu/EF-1A subfamily. As to quaternary structure, monomer. Interacts with BrxC. Post-translationally, phosphorylated on Thr-385 in vitro by PrkC in the presence of poly-L-lysine or myelin basic protein, dephosphorylated by PrpC.

The protein resides in the cytoplasm. The catalysed reaction is GTP + H2O = GDP + phosphate + H(+). Functionally, GTP hydrolase that promotes the GTP-dependent binding of aminoacyl-tRNA to the A-site of ribosomes during protein biosynthesis. This Bacillus subtilis (strain 168) protein is Elongation factor Tu.